We begin with the raw amino-acid sequence, 411 residues long: Gamma-glutamyl phosphate reductase (411 aa).

This sequence belongs to the gamma-glutamyl phosphate reductase family.

Its subcellular location is the cytoplasm. The enzyme catalyses L-glutamate 5-semialdehyde + phosphate + NADP(+) = L-glutamyl 5-phosphate + NADPH + H(+). It functions in the pathway amino-acid biosynthesis; L-proline biosynthesis; L-glutamate 5-semialdehyde from L-glutamate: step 2/2. Catalyzes the NADPH-dependent reduction of L-glutamate 5-phosphate into L-glutamate 5-semialdehyde and phosphate. The product spontaneously undergoes cyclization to form 1-pyrroline-5-carboxylate. The protein is Gamma-glutamyl phosphate reductase of Wolinella succinogenes (strain ATCC 29543 / DSM 1740 / CCUG 13145 / JCM 31913 / LMG 7466 / NCTC 11488 / FDC 602W) (Vibrio succinogenes).